Here is a 95-residue protein sequence, read N- to C-terminus: Cell division topological specificity factor (95 aa).

It belongs to the MinE family.

Functionally, prevents the cell division inhibition by proteins MinC and MinD at internal division sites while permitting inhibition at polar sites. This ensures cell division at the proper site by restricting the formation of a division septum at the midpoint of the long axis of the cell. The polypeptide is Cell division topological specificity factor (Methylorubrum extorquens (strain CM4 / NCIMB 13688) (Methylobacterium extorquens)).